Reading from the N-terminus, the 569-residue chain is Glutamate--tRNA ligase, chloroplastic/mitochondrial (569 aa).

59 to 61 (RFA) contacts L-glutamate. Positions 62-72 (PSPTGNLHVGG) match the 'HIGH' region motif. His-69 lines the ATP pocket. Residues Glu-95, 247–251 (YNFCV), and Arg-265 contribute to the L-glutamate site. ATP is bound by residues Glu-268 and 303–307 (KLSKR). The 'KMSKS' region motif lies at 303–307 (KLSKR).

It belongs to the class-I aminoacyl-tRNA synthetase family. Glutamate--tRNA ligase type 1 subfamily.

Its subcellular location is the plastid. The protein resides in the chloroplast. It is found in the mitochondrion. It catalyses the reaction tRNA(Glu) + L-glutamate + ATP = L-glutamyl-tRNA(Glu) + AMP + diphosphate. Catalyzes the attachment of glutamate to tRNA(Glu) in a two-step reaction: glutamate is first activated by ATP to form Glu-AMP and then transferred to the acceptor end of tRNA(Glu). The polypeptide is Glutamate--tRNA ligase, chloroplastic/mitochondrial (Nicotiana tabacum (Common tobacco)).